Here is a 799-residue protein sequence, read N- to C-terminus: Cadherin-8 (799 aa).

The first 29 residues, 1–29 (MPERLAEMLLDLWTPLIILWITLPPCIYM), serve as a signal peptide directing secretion. Residues 30–61 (APMNQSQVLMSGSPLELNSLGEEQRILNRSKR) constitute a propeptide that is removed on maturation. N-linked (GlcNAc...) asparagine glycans are attached at residues Asn33 and Asn57. 5 consecutive Cadherin domains span residues 62–167 (GWVW…APEF), 168–276 (LNGP…PPKF), 277–391 (AQSL…PPVF), 392–494 (SSPT…DNAP), and 495–616 (EFAS…YVLP). The Extracellular portion of the chain corresponds to 62-621 (GWVWNQMFVL…AYVLPIGLSM (560 aa)). Residue Asn188 is glycosylated (N-linked (GlcNAc...) asparagine). 3 N-linked (GlcNAc...) asparagine glycosylation sites follow: Asn463, Asn473, and Asn544. The chain crosses the membrane as a helical span at residues 622-642 (GALIAILACIILLLVIVVLFV). Over 643–799 (TLRRHKNEPL…YSVGESDKET (157 aa)) the chain is Cytoplasmic. Position 795 is a phosphoserine (Ser795).

As to expression, mainly expressed in brain. Found in certain nerve cell lines, such as retinoblasts, glioma cells and neuroblasts.

Its subcellular location is the cell membrane. Its function is as follows. Cadherins are calcium-dependent cell adhesion proteins. They preferentially interact with themselves in a homophilic manner in connecting cells; cadherins may thus contribute to the sorting of heterogeneous cell types. This is Cadherin-8 (CDH8) from Homo sapiens (Human).